Here is a 100-residue protein sequence, read N- to C-terminus: Urease subunit gamma (100 aa).

The protein belongs to the urease gamma subunit family. As to quaternary structure, heterotrimer of UreA (gamma), UreB (beta) and UreC (alpha) subunits. Three heterotrimers associate to form the active enzyme.

The protein localises to the cytoplasm. The catalysed reaction is urea + 2 H2O + H(+) = hydrogencarbonate + 2 NH4(+). It participates in nitrogen metabolism; urea degradation; CO(2) and NH(3) from urea (urease route): step 1/1. This chain is Urease subunit gamma, found in Saccharopolyspora erythraea (strain ATCC 11635 / DSM 40517 / JCM 4748 / NBRC 13426 / NCIMB 8594 / NRRL 2338).